Consider the following 210-residue polypeptide: MKIVWYGHACFLIKTKGVSILIDPYPDVDEDRMEKVDYILITHEHMDHYGKTPLIAKLNDAEVIGPKTVYLMAISDGLTKVREIEAGQEIQLGDVTVKAFYTEHPTSQYPLGYLIIGDKRVAHLGDTYYSPSFKNLRGQVDILLVPIGGRSTASEREAVDIVDIIRPRIAVPMHYGTYGGGSAEGFKRELQRRRVWVLVKDLKPYEGFEV.

It belongs to the UPF0173 family.

The polypeptide is UPF0173 protein PYRAB01190 (Pyrococcus abyssi (strain GE5 / Orsay)).